The primary structure comprises 695 residues: UvrABC system protein B (695 aa).

In terms of domain architecture, Helicase ATP-binding spans 25-176 (KSILEGHRFQ…NQREVLRDLA (152 aa)). 38–45 (GATGTGKT) contributes to the ATP binding site. A Beta-hairpin motif is present at residues 91–114 (YYDYYQPEAYVPSTDTYIAKSSSI). In terms of domain architecture, Helicase C-terminal spans 454 to 617 (LLGEIYLRLE…ITPKPIIKKN (164 aa)). The region spanning 652–687 (PELIGQLELKMKAAAKNLEFEEAAQLRDQIKKLRQR) is the UVR domain.

It belongs to the UvrB family. Forms a heterotetramer with UvrA during the search for lesions. Interacts with UvrC in an incision complex.

The protein resides in the cytoplasm. The UvrABC repair system catalyzes the recognition and processing of DNA lesions. A damage recognition complex composed of 2 UvrA and 2 UvrB subunits scans DNA for abnormalities. Upon binding of the UvrA(2)B(2) complex to a putative damaged site, the DNA wraps around one UvrB monomer. DNA wrap is dependent on ATP binding by UvrB and probably causes local melting of the DNA helix, facilitating insertion of UvrB beta-hairpin between the DNA strands. Then UvrB probes one DNA strand for the presence of a lesion. If a lesion is found the UvrA subunits dissociate and the UvrB-DNA preincision complex is formed. This complex is subsequently bound by UvrC and the second UvrB is released. If no lesion is found, the DNA wraps around the other UvrB subunit that will check the other stand for damage. This chain is UvrABC system protein B, found in Synechococcus sp. (strain JA-3-3Ab) (Cyanobacteria bacterium Yellowstone A-Prime).